Here is a 1765-residue protein sequence, read N- to C-terminus: Sodium channel protein type 11 subunit alpha (1765 aa).

Topologically, residues 1-126 (MEERYYPVIF…PIRSFMIRIS (126 aa)) are cytoplasmic. An I repeat occupies 115 to 406 (FNPIRSFMIR…VTMAYEEQNR (292 aa)). The helical transmembrane segment at 127-148 (VHSVFSMFIICTVIINCMFMAN) threads the bilayer. An N-linked (GlcNAc...) asparagine glycan is attached at Asn-149. The Extracellular segment spans residues 149-159 (NSSVDSRPSSN). A helical membrane pass occupies residues 160 to 179 (IPEYVFIGIYVLEAVIKILA). Residues 180–191 (RGFIVDEFSYLR) are Cytoplasmic-facing. Residues 192–211 (DPWNWLDFIVIGTAIAPCFL) traverse the membrane as a helical segment. The Extracellular portion of the chain corresponds to 212–219 (GNKVNNLS). A glycan (N-linked (GlcNAc...) asparagine) is linked at Asn-217. The helical; Voltage-sensor transmembrane segment at 220-239 (TLRTFRVLRALKAISVISGL) threads the bilayer. The Cytoplasmic portion of the chain corresponds to 240-255 (KVIVGALLRSVKKLVD). Residues 256–269 (VMVLTLFCLSIFAL) traverse the membrane as a helical segment. At 270–342 (VGQQLFMGIL…PDYNYTNFDS (73 aa)) the chain is on the extracellular side. A disulfide bridge links Cys-283 with Cys-320. N-linked (GlcNAc...) asparagine glycans are attached at residues Asn-303, Asn-327, and Asn-336. The segment at residues 343–367 (FGWSFLAMFRVMTQDSWEKLYRQIL) is an intramembrane region (pore-forming). Residues 368–374 (RTSGIYF) are Extracellular-facing. Residues 375 to 400 (VFFFVVVIFLGSFYLLNLTLAVVTMA) traverse the membrane as a helical segment. Residues 401–570 (YEEQNRNVAA…WLCIKKVLQT (170 aa)) are Cytoplasmic-facing. Positions 470–490 (RGSKTARASASDSEDDASKNP) are disordered. The stretch at 557–821 (CSPPWLCIKK…EGETRKTKVQ (265 aa)) is one II repeat. A helical membrane pass occupies residues 571–594 (IMTDPFTELAITICIIVNTVFLAM). Residues 595–605 (EHHNMDNSLKD) are Extracellular-facing. Residues 606-629 (ILKIGNWVFTGIFIAEMCLKIIAL) traverse the membrane as a helical segment. The Cytoplasmic portion of the chain corresponds to 630–637 (DPYHYFRH). Residues 638 to 659 (GWNIFDSIVALVSLADVLFHKL) traverse the membrane as a helical segment. Topologically, residues 660–664 (SKNLS) are extracellular. Residue Asn-662 is glycosylated (N-linked (GlcNAc...) asparagine). A helical; Voltage-sensor membrane pass occupies residues 665–684 (FLASLRVLRVFKLAKSWPTL). At 685–699 (NTLIKIIGHSVGALG) the chain is on the cytoplasmic side. Residues 700–722 (NLTVVLTIVVFIFSVVGMRLFGA) traverse the membrane as a helical segment. At 723-742 (KFNKTCSTSPESLRRWHMGD) the chain is on the extracellular side. Residue Asn-725 is glycosylated (N-linked (GlcNAc...) asparagine). Positions 743–763 (FYHSFLVVFRILCGEWIENMW) form an intramembrane region, pore-forming. Residues 764–773 (ECMQEMEGSP) lie on the Extracellular side of the membrane. Cysteines 765 and 775 form a disulfide. The chain crosses the membrane as a helical span at residues 774–799 (LCVIVFVLIMVVGKLVVLNLFIALLL). Over 800-1030 (NSFSNEEKDG…WWNLRKTCYQ (231 aa)) the chain is Cytoplasmic. The interval 850–869 (NSPKPNEATESFAGESRDTA) is disordered. The III repeat unit spans residues 1023 to 1320 (NLRKTCYQIV…KKYYNAMKKL (298 aa)). Residues 1031 to 1053 (IVKHSWFESFIIFVILLSSGALI) traverse the membrane as a helical segment. Residues 1054–1067 (FEDVNLPSRPQVEK) lie on the Extracellular side of the membrane. The helical transmembrane segment at 1068–1093 (LLKCTDNIFTFIFLLEMILKWVAFGF) threads the bilayer. Residues 1094–1099 (RKYFTS) are Cytoplasmic-facing. Residues 1100-1117 (AWCWLDFLIVVVSGLSLT) traverse the membrane as a helical segment. Position 1118 (Asn-1118) is a topological domain, extracellular. The chain crosses the membrane as a helical; Voltage-sensor span at residues 1119 to 1140 (LPNLKSFRNLRALRPLRALSQF). Topologically, residues 1141 to 1159 (EGMKVVVNALMSAIPAILN) are cytoplasmic. A helical transmembrane segment spans residues 1160–1181 (VLLVCLIFWLIFCILGVNFFSG). Topologically, residues 1182-1224 (KFGRCINGTDINKYFNASNVPNQSQCLVSNYTWKVPNVNFDNV) are extracellular. Asn-1188, Asn-1197, Asn-1203, and Asn-1211 each carry an N-linked (GlcNAc...) asparagine glycan. The segment at residues 1225-1246 (GNAYLALLQVATYKGWLDIMNA) is an intramembrane region (pore-forming). Over 1247–1262 (AVDSRGKDEQPAFEAN) the chain is Extracellular. The chain crosses the membrane as a helical span at residues 1263–1289 (LYAYLYFVVFIIFGSFFTLNLFIGVII). Over 1290–1342 (DNFNQQQKKLGGQDIFMTEEQKKYYNAMKKLGTKKPQKPIPRPLNKCQAFVFD) the chain is Cytoplasmic. The stretch at 1329 to 1619 (IPRPLNKCQA…WEKFDPEATQ (291 aa)) is one IV repeat. Residues 1343 to 1366 (LVTSQVFDVIILGLIVTNMIIMMA) form a helical membrane-spanning segment. The Extracellular segment spans residues 1367–1377 (ESEGQPNEVKK). A helical membrane pass occupies residues 1378–1401 (IFDILNIVFVVIFTVECLIKVFAL). Over 1402–1407 (RQHYFT) the chain is Cytoplasmic. A helical transmembrane segment spans residues 1408 to 1431 (NGWNLFDCVVVVLSIISTLVSGLE). Over 1432–1440 (NSNVFPPTL) the chain is Extracellular. Residues 1441–1463 (FRIVRLARIGRILRLVRAARGIR) form a helical; Voltage-sensor membrane-spanning segment. At 1464–1478 (TLLFALMMSLPSLFN) the chain is on the cytoplasmic side. Residues 1479–1501 (IGLLLFLVMFIYAIFGMNWFSKV) traverse the membrane as a helical segment. Over 1502–1515 (KRGSGIDDIFNFDT) the chain is Extracellular. Residues 1516–1538 (FSGSMLCLFQITTSAGWDALLNP) constitute an intramembrane region (pore-forming). At 1539–1559 (MLESKASCNSSSQESCQQPQI) the chain is on the extracellular side. A helical transmembrane segment spans residues 1560–1584 (AIVYFVSYIIISFLIVVNMYIAVIL). The Cytoplasmic portion of the chain corresponds to 1585–1765 (ENFNTATEES…DVPKIKVHCD (181 aa)).

Belongs to the sodium channel (TC 1.A.1.10) family. Nav1.9/SCN11A subfamily. The voltage-resistant sodium channel consists of an ion conducting pore forming alpha-subunit regulated by one or more auxiliary subunits SCN1B, SCN2B and SCN3B. Expressed in the dorsal root ganglia (C-fiber neurons), spinal cord, trigeminal ganglia, testis, ovary, uterus and small intestine.

The protein resides in the cell membrane. The enzyme catalyses Na(+)(in) = Na(+)(out). In terms of biological role, sodium channel mediating the voltage-dependent sodium ion permeability of excitable membranes. Assuming opened or closed conformations in response to the voltage difference across the membrane, the protein forms a sodium-selective channel through which sodium ions may pass in accordance with their electrochemical gradient. Involved in membrane depolarization during action potential in nociceptors which function as key relay stations for the electrical transmission of pain signals from the periphery to the central nervous system. Also involved in rapid BDNF-evoked neuronal depolarization. This chain is Sodium channel protein type 11 subunit alpha, found in Mus musculus (Mouse).